The sequence spans 739 residues: DNA ligase (739 aa).

Residues 34–38 (DADYD), 83–84 (SL), and Glu-117 each bind NAD(+). Lys-119 functions as the N6-AMP-lysine intermediate in the catalytic mechanism. NAD(+)-binding residues include Arg-140, Glu-175, Lys-291, and Lys-315. 4 residues coordinate Zn(2+): Cys-420, Cys-423, Cys-438, and Cys-444. A BRCT domain is found at 660–739 (ADDSPVAGKT…DGWLDLIGQA (80 aa)).

It belongs to the NAD-dependent DNA ligase family. LigA subfamily. The cofactor is Mg(2+). It depends on Mn(2+) as a cofactor.

It catalyses the reaction NAD(+) + (deoxyribonucleotide)n-3'-hydroxyl + 5'-phospho-(deoxyribonucleotide)m = (deoxyribonucleotide)n+m + AMP + beta-nicotinamide D-nucleotide.. DNA ligase that catalyzes the formation of phosphodiester linkages between 5'-phosphoryl and 3'-hydroxyl groups in double-stranded DNA using NAD as a coenzyme and as the energy source for the reaction. It is essential for DNA replication and repair of damaged DNA. The sequence is that of DNA ligase from Ruegeria sp. (strain TM1040) (Silicibacter sp.).